Reading from the N-terminus, the 649-residue chain is Transcription factor tau 95 kDa subunit (649 aa).

A disordered region spans residues 1-21 (MPVEEPLATLSSIPDSSADQA). Residues 9–19 (TLSSIPDSSAD) are compositionally biased toward polar residues. The stretch at 221–239 (PSTDFQLPPPPKLSMVGFP) is repeat 1. Residues 221–419 (PSTDFQLPPP…PPLVFESDTP (199 aa)) are 2 X repeats, Pro-rich. A Nuclear localization signal motif is present at residues 296-300 (AKKTK). The stretch at 400–419 (PIVKKNVPKPPPLVFESDTP) is repeat 2. Positions 556 to 612 (IAAGDDFDDNGAITEEPDDAALENEEMDTDQNLKVPASIDDDVDDVDADEEEQESFD) are disordered. Composition is skewed to acidic residues over residues 560 to 584 (DDFDDNGAITEEPDDAALENEEMDT) and 594 to 610 (IDDDVDDVDADEEEQES). At S617 the chain carries Phosphoserine.

This sequence belongs to the TFIIIC subunit 5 family. As to quaternary structure, component of the TFIIIC complex composed of TFC1, TFC3, TFC4, TFC6, TFC7 and TFC8. The subunits are organized in two globular domains, tauA and tauB, connected by a proteolysis-sensitive and flexible linker. Interacts with TFC3, TFC4 and TFC6.

The protein resides in the nucleus. Its function is as follows. TFIIIC mediates tRNA and 5S RNA gene activation by binding to intragenic promoter elements. Upstream of the transcription start site, TFIIIC assembles the initiation complex TFIIIB-TFIIIC-tDNA, which is sufficient for RNA polymerase III recruitment and function. Part of the tauA domain of TFIIIC that binds boxA DNA promoter sites of tRNA and similar genes. Participates in the interconnection of tauA with tauB via its contacts with TFC3 and TFC6. Serves as a scaffold critical for tauA-DNA spatial configuration and tauB-DNA stability. In Saccharomyces cerevisiae (strain ATCC 204508 / S288c) (Baker's yeast), this protein is Transcription factor tau 95 kDa subunit (TFC1).